A 156-amino-acid polypeptide reads, in one-letter code: Probable chemoreceptor glutamine deamidase CheD (156 aa).

It belongs to the CheD family.

It carries out the reaction L-glutaminyl-[protein] + H2O = L-glutamyl-[protein] + NH4(+). Its function is as follows. Probably deamidates glutamine residues to glutamate on methyl-accepting chemotaxis receptors (MCPs), playing an important role in chemotaxis. The sequence is that of Probable chemoreceptor glutamine deamidase CheD from Sulfurimonas denitrificans (strain ATCC 33889 / DSM 1251) (Thiomicrospira denitrificans (strain ATCC 33889 / DSM 1251)).